A 127-amino-acid polypeptide reads, in one-letter code: Flagellar assembly factor FliW (127 aa).

This sequence belongs to the FliW family. In terms of assembly, interacts with translational regulator CsrA and flagellin(s).

Its subcellular location is the cytoplasm. Acts as an anti-CsrA protein, binds CsrA and prevents it from repressing translation of its target genes, one of which is flagellin. Binds to flagellin and participates in the assembly of the flagellum. This chain is Flagellar assembly factor FliW, found in Campylobacter concisus (strain 13826).